We begin with the raw amino-acid sequence, 248 residues long: Superoxide dismutase [Mn] 1 (248 aa).

An N-terminal signal peptide occupies residues 1–41 (MQTTFRRILILFVGLLVPLFFACQSNSQVDAAPSAAPQLSA). His-68, His-123, Asp-208, and His-212 together coordinate Mn(2+).

It belongs to the iron/manganese superoxide dismutase family. As to quaternary structure, homodimer. Requires Mn(2+) as cofactor.

It carries out the reaction 2 superoxide + 2 H(+) = H2O2 + O2. Functionally, destroys superoxide anion radicals which are normally produced within the cells and which are toxic to biological systems. The polypeptide is Superoxide dismutase [Mn] 1 (sodA1) (Leptolyngbya boryana (Plectonema boryanum)).